The chain runs to 317 residues: Ribose-phosphate pyrophosphokinase (317 aa).

Residues 43 to 45 (DGE) and 102 to 103 (RQ) each bind ATP. ADP is bound by residues Lys-106 and Arg-110. Residue His-136 coordinates Mg(2+). ADP is bound by residues Gln-141 and 149–150 (DH). Asp-175 lines the Mg(2+) pocket. The active site involves Lys-198. Residues Arg-200, Asp-224, and 228-232 (DTAGT) contribute to the D-ribose 5-phosphate site. 311–313 (SVS) serves as a coordination point for ADP.

The protein belongs to the ribose-phosphate pyrophosphokinase family. Class I subfamily. As to quaternary structure, homohexamer; trimer of dimers. Mg(2+) serves as cofactor.

It is found in the cytoplasm. The catalysed reaction is D-ribose 5-phosphate + ATP = 5-phospho-alpha-D-ribose 1-diphosphate + AMP + H(+). Its pathway is metabolic intermediate biosynthesis; 5-phospho-alpha-D-ribose 1-diphosphate biosynthesis; 5-phospho-alpha-D-ribose 1-diphosphate from D-ribose 5-phosphate (route I): step 1/1. Activated by inorganic phosphate, and to a lesser extent by sulfate ions. In addition to form a complex with ATP, Mg(2+) also acts as a cofactor. Strongly inhibited by ADP through competitive binding at the activation site and at a specific allosteric site. Less strongly inhibited by alpha,beta-methylene ATP (mADP), AMP, GDP, GMP and UTP. Involved in the biosynthesis of the central metabolite phospho-alpha-D-ribosyl-1-pyrophosphate (PRPP) via the transfer of pyrophosphoryl group from ATP to 1-hydroxyl of ribose-5-phosphate (Rib-5-P). In Bacillus subtilis (strain 168), this protein is Ribose-phosphate pyrophosphokinase.